A 569-amino-acid chain; its full sequence is 4-hydroxy-7-methoxy-3-oxo-3,4-dihydro-2H-1,4-benzoxazin-2-yl glucoside beta-D-glucosidase 1b, chloroplastic (569 aa).

Residues 1 to 50 constitute a chloroplast transit peptide; that stretch reads MALLAAATLNPTTHLSLRSRAGRNSENLWLRSTASSQKSKGRFCNLTIRA. A beta-D-glucoside is bound by residues glutamine 92, histidine 194, and 239 to 240; that span reads NE. The Proton donor role is filled by glutamate 240. Cysteines 259 and 265 form a disulfide. A beta-D-glucoside is bound by residues tyrosine 383, glutamate 456, tryptophan 504, 511–512, and phenylalanine 520; that span reads EW. Glutamate 456 (nucleophile) is an active-site residue.

Belongs to the glycosyl hydrolase 1 family. In terms of assembly, homo- and heterohexamers. Expressed in young seedlings early after germination.

Its subcellular location is the plastid. The protein resides in the chloroplast. The enzyme catalyses Hydrolysis of terminal, non-reducing beta-D-glucosyl residues with release of beta-D-glucose.. It carries out the reaction DIMBOA beta-D-glucoside + H2O = DIMBOA + D-glucose. The catalysed reaction is DIBOA beta-D-glucoside + H2O = DIBOA + D-glucose. Its function is as follows. Acts in defense of young plant parts against pests via the production of hydroxamic acids from hydroxamic acid glucosides. Enzymatic activity is highly correlated with plant growth. The preferred substrate is DIMBOA-beta-D-glucoside. The chain is 4-hydroxy-7-methoxy-3-oxo-3,4-dihydro-2H-1,4-benzoxazin-2-yl glucoside beta-D-glucosidase 1b, chloroplastic (GLU1B) from Triticum aestivum (Wheat).